The sequence spans 259 residues: Phosphonates import ATP-binding protein PhnC (259 aa).

Positions 4–245 (ISIQSVTKRF…ALRTIYQREG (242 aa)) constitute an ABC transporter domain. 37–44 (GPSGAGKS) is a binding site for ATP.

It belongs to the ABC transporter superfamily. Phosphonates importer (TC 3.A.1.9.1) family. In terms of assembly, the complex is composed of two ATP-binding proteins (PhnC), two transmembrane proteins (PhnE) and a solute-binding protein (PhnD).

Its subcellular location is the cell inner membrane. It catalyses the reaction phosphonate(out) + ATP + H2O = phosphonate(in) + ADP + phosphate + H(+). Part of the ABC transporter complex PhnCDE involved in phosphonates import. Responsible for energy coupling to the transport system. The chain is Phosphonates import ATP-binding protein PhnC from Thiobacillus denitrificans (strain ATCC 25259 / T1).